Consider the following 551-residue polypeptide: Tripartite motif-containing protein 5 (551 aa).

Position 2 is an N-acetylalanine (alanine 2). The segment at 15–55 adopts an RING-type zinc-finger fold; that stretch reads CPICLELLTEPLSLDCGHSFCQACITANHKESRERSCPLCR. At serine 82 the chain carries Phosphoserine. The B box-type zinc-finger motif lies at 87–128; that stretch reads QKVDRCARHGEKLLLFCQQHGNVICWLCERSEEHRGHRTSLV. Residues cysteine 92, histidine 95, cysteine 114, and histidine 120 each contribute to the Zn(2+) site. Positions 127–221 form a coiled coil; it reads LVEEVAQKYR…VQSENDMVLQ (95 aa). The segment at 182–195 is required for interaction with GABARAP and for autophagy; the sequence is FKQLRDILDCEESN. The B30.2/SPRY domain maps to 276-551; it reads PDLKGMLQVF…LPMTLCSPSS (276 aa).

The protein belongs to the TRIM/RBCC family. Can form homodimers and homotrimers. In addition to lower-order dimerization, also exhibits a higher-order multimerization and both low- and high-order multimerizations are essential for its restriction activity. Interacts with BTBD1 and BTBD2. Interacts with PSMC4, PSMC5, PSMD7 and HSPA8/HSC70. Interacts (via B30.2/SPRY domain) with HSPA1A/B. Interacts with PSMC2, MAP3K7/TAK1, TAB2 and TAB3. Interacts with SQSTM1. Interacts with TRIM6 and TRIM34. Interacts with ULK1 (phosphorylated form), GABARAP, GABARAPL1, GABARAPL2, MAP1LC3A, MAP1LC3C and BECN1. Degraded in a proteasome-independent fashion in the absence of viral infection but in a proteasome-dependent fashion following exposure to restriction sensitive virus. Post-translationally, autoubiquitinated in a RING finger- and UBE2D2-dependent manner. Monoubiquitinated by TRIM21. Deubiquitinated by Yersinia YopJ. Ubiquitination may not lead to proteasomal degradation.

The protein localises to the cytoplasm. Its subcellular location is the nucleus. The catalysed reaction is S-ubiquitinyl-[E2 ubiquitin-conjugating enzyme]-L-cysteine + [acceptor protein]-L-lysine = [E2 ubiquitin-conjugating enzyme]-L-cysteine + N(6)-ubiquitinyl-[acceptor protein]-L-lysine.. It participates in protein modification; protein ubiquitination. Functionally, capsid-specific restriction factor that prevents infection from non-host-adapted retroviruses. Blocks viral replication early in the life cycle, after viral entry but before reverse transcription. In addition to acting as a capsid-specific restriction factor, also acts as a pattern recognition receptor that activates innate immune signaling in response to the retroviral capsid lattice. Binding to the viral capsid triggers its E3 ubiquitin ligase activity, and in concert with the heterodimeric ubiquitin conjugating enzyme complex UBE2V1-UBE2N (also known as UBC13-UEV1A complex) generates 'Lys-63'-linked polyubiquitin chains, which in turn are catalysts in the autophosphorylation of the MAP3K7/TAK1 complex (includes TAK1, TAB2, and TAB3). Activation of the MAP3K7/TAK1 complex by autophosphorylation results in the induction and expression of NF-kappa-B and MAPK-responsive inflammatory genes, thereby leading to an innate immune response in the infected cell. Plays a role in regulating autophagy through activation of autophagy regulator BECN1 by causing its dissociation from its inhibitors BCL2 and TAB2. The sequence is that of Tripartite motif-containing protein 5 (TRIM5) from Alouatta sara (Bolivian red howler monkey).